A 575-amino-acid polypeptide reads, in one-letter code: Beta-amylase (575 aa).

Residues 1 to 36 (MLHSQKRIWKKIGLCLLSFILGITVFTGSFGSKAEA) form the signal peptide. Asp-77 is a binding site for substrate. Positions 84 and 88 each coordinate Ca(2+). The substrate site is built by His-117 and Asp-125. Residues Cys-119 and Cys-127 are joined by a disulfide bond. Glu-171 provides a ligand contact to Ca(2+). The active-site Proton donor is the Glu-199. The substrate site is built by Lys-315, His-320, and Thr-358. The Proton acceptor role is filled by Glu-395. Residues 396–397 (NA) and Arg-424 contribute to the substrate site.

This sequence belongs to the glycosyl hydrolase 14 family. In terms of assembly, monomer. Ca(2+) serves as cofactor.

The enzyme catalyses Hydrolysis of (1-&gt;4)-alpha-D-glucosidic linkages in polysaccharides so as to remove successive maltose units from the non-reducing ends of the chains.. The chain is Beta-amylase from Niallia circulans (Bacillus circulans).